The chain runs to 426 residues: MQCDFRVHQDARLARVYYFTEVWWMFIFKFLEPKMLINSVLFLAIWSSSFAEESSSSDATSNKRAAMGFQDMRGNKNLIPTSLEHNKLSKRTLMDFQDNKDSNAPDIEDNLSHEFEKRAPMGFQGMRGKKGYLTPDFEDSYFRDEKRAPMGFQGMRGKKVVSDDDYYKRAPMGFQGMRGKKSLEEVLGEIEKKAAMDYYDTRDKKTYVFEYPEDYEKRLLASIRGKLKEFPMEWEKRAPMGFQGMRGKKSLLDEIEELEKRTIMGFQGMRGKKNALENYIDYYLDPDMDFDKRAPMGFQGMRGKKDSDKRAPMGFQGMRGKRNTGQRFDTGINFNIRSSNEYQGTNNRRNALASCQLEKRSPFRYFEMRGKKNPRWELRGMFVGVRGKKWATAPYEDDSPFISVFDNTERIGVDGDSPAILGNSIS.

Positions 1–116 are excised as a propeptide; the sequence is MQCDFRVHQD…IEDNLSHEFE (116 aa). Arginine amide is present on arginine 127. A propeptide spanning residues 131–145 is cleaved from the precursor; that stretch reads GYLTPDFEDSYFRDE. Arginine 156 is modified (arginine amide). Positions 160 to 167 are excised as a propeptide; the sequence is VVSDDDYY. Arginine 178 is subject to Arginine amide. The propeptide occupies 182–235; that stretch reads SLEEVLGEIEKKAAMDYYDTRDKKTYVFEYPEDYEKRLLASIRGKLKEFPMEWE. Position 246 is an arginine amide (arginine 246). The propeptide occupies 250–259; it reads SLLDEIEELE. Arginine amide is present on arginine 270. The propeptide occupies 274-291; that stretch reads NALENYIDYYLDPDMDFD. Positions 299–329 are disordered; sequence QGMRGKKDSDKRAPMGFQGMRGKRNTGQRFD. Arginine 302 is subject to Arginine amide. The propeptide occupies 306–308; the sequence is DSD. Arginine 319 is subject to Arginine amide. A propeptide spanning residues 323 to 358 is cleaved from the precursor; that stretch reads NTGQRFDTGINFNIRSSNEYQGTNNRRNALASCQLE. 2 positions are modified to arginine amide: arginine 369 and arginine 386. A propeptide spanning residues 390–426 is cleaved from the precursor; the sequence is WATAPYEDDSPFISVFDNTERIGVDGDSPAILGNSIS.

This sequence belongs to the tachykinin family. Tachykinins (TK) are expressed throughout the nervous system. APMGFQGMR-amide is also expressed in the retrocerebral complex (at protein level).

It is found in the secreted. In terms of biological role, tachykinins are active peptides which excite neurons, evoke behavioral responses, are potent vasodilators and secretagogues, and contract (directly or indirectly) many smooth muscles. This Camponotus floridanus (Florida carpenter ant) protein is Tachykinins.